A 595-amino-acid chain; its full sequence is Arginine--tRNA ligase (595 aa).

The short motif at 132–142 (ANPTGPLHVGH) is the 'HIGH' region element.

Belongs to the class-I aminoacyl-tRNA synthetase family. In terms of assembly, monomer.

Its subcellular location is the cytoplasm. The enzyme catalyses tRNA(Arg) + L-arginine + ATP = L-arginyl-tRNA(Arg) + AMP + diphosphate. This chain is Arginine--tRNA ligase, found in Cupriavidus taiwanensis (strain DSM 17343 / BCRC 17206 / CCUG 44338 / CIP 107171 / LMG 19424 / R1) (Ralstonia taiwanensis (strain LMG 19424)).